We begin with the raw amino-acid sequence, 272 residues long: Transcription factor PU.1 (272 aa).

Positions 126-165 are disordered; it reads SPAHQQSSDEEEGERQSPPLEVSDGEADGLEPGPGLLHGE. 2 positions are modified to phosphoserine: serine 142 and serine 148. Positions 155–165 are enriched in low complexity; that stretch reads LEPGPGLLHGE. Positions 172 to 255 form a DNA-binding region, ETS; that stretch reads IRLYQFLLDL…VKKKLTYQFS (84 aa). Positions 219, 232, 235, and 245 each coordinate DNA.

It belongs to the ETS family. Binds DNA as a monomer. Can form homomers. Directly interacts with CEBPD/NF-IL6-beta; this interaction does not affect DNA-binding properties of each partner. Interacts with NONO/p54(nrb). Interacts with RUNX1/AML1. Interacts with GFI1; the interaction represses SPI1 transcriptional activity, hence blocks SPI1-induced macrophage differentiation of myeloid progenitor cells. Interacts with CEBPE. Interacts with IRF4/Pip and IRF8. Interacts with JUN. Interacts with RB1. Interacts with TBP. In terms of tissue distribution, expressed in spleen, thymus and bone-marrow macrophages.

It localises to the nucleus. Transcriptional activity at macrophage-specific genes is inhibited by interaction with GFI1, which results in inhibition of SPI1-induced macrophage differentiation of myeloid progenitor cells, but not that of the granulocyte lineage. In terms of biological role, pioneer transcription factor, which controls hematopoietic cell fate by decompacting stem cell heterochromatin and allowing other transcription factors to enter otherwise inaccessible genomic sites. Once in open chromatin, can directly control gene expression by binding genetic regulatory elements and can also more broadly influence transcription by recruiting transcription factors, such as interferon regulatory factors (IRFs), to otherwise inaccessible genomic regions. Transcriptionally activates genes important for myeloid and lymphoid lineages, such as CSF1R. Transcriptional activation from certain promoters, possibly containing low affinity binding sites, is achieved cooperatively with other transcription factors. FCER1A transactivation is achieved in cooperation with GATA1. May be particularly important for the pro- to pre-B cell transition. Binds (via the ETS domain) onto the purine-rich DNA core sequence 5'-GAGGAA-3', also known as the PU-box. In vitro can bind RNA and interfere with pre-mRNA splicing. The chain is Transcription factor PU.1 (Spi1) from Mus musculus (Mouse).